Here is a 378-residue protein sequence, read N- to C-terminus: Queuine tRNA-ribosyltransferase (378 aa).

Asp-89 acts as the Proton acceptor in catalysis. Substrate is bound by residues 89–93, Asp-143, Gln-187, and Gly-214; that span reads DSGGF. An RNA binding region spans residues 245–251; sequence GVGKPED. Asp-264 acts as the Nucleophile in catalysis. The tract at residues 269–273 is RNA binding; important for wobble base 34 recognition; that stretch reads TRNAR. Zn(2+)-binding residues include Cys-302, Cys-304, Cys-307, and His-333.

The protein belongs to the queuine tRNA-ribosyltransferase family. Homodimer. Within each dimer, one monomer is responsible for RNA recognition and catalysis, while the other monomer binds to the replacement base PreQ1. Zn(2+) is required as a cofactor.

It carries out the reaction 7-aminomethyl-7-carbaguanine + guanosine(34) in tRNA = 7-aminomethyl-7-carbaguanosine(34) in tRNA + guanine. It functions in the pathway tRNA modification; tRNA-queuosine biosynthesis. Catalyzes the base-exchange of a guanine (G) residue with the queuine precursor 7-aminomethyl-7-deazaguanine (PreQ1) at position 34 (anticodon wobble position) in tRNAs with GU(N) anticodons (tRNA-Asp, -Asn, -His and -Tyr). Catalysis occurs through a double-displacement mechanism. The nucleophile active site attacks the C1' of nucleotide 34 to detach the guanine base from the RNA, forming a covalent enzyme-RNA intermediate. The proton acceptor active site deprotonates the incoming PreQ1, allowing a nucleophilic attack on the C1' of the ribose to form the product. After dissociation, two additional enzymatic reactions on the tRNA convert PreQ1 to queuine (Q), resulting in the hypermodified nucleoside queuosine (7-(((4,5-cis-dihydroxy-2-cyclopenten-1-yl)amino)methyl)-7-deazaguanosine). This is Queuine tRNA-ribosyltransferase from Yersinia enterocolitica serotype O:8 / biotype 1B (strain NCTC 13174 / 8081).